Here is a 131-residue protein sequence, read N- to C-terminus: Glycine cleavage system H protein (131 aa).

The Lipoyl-binding domain occupies 24-106 (TVTIGITDHA…YEDGWIIKLK (83 aa)). K65 is modified (N6-lipoyllysine).

The protein belongs to the GcvH family. As to quaternary structure, the glycine cleavage system is composed of four proteins: P, T, L and H. (R)-lipoate serves as cofactor.

Functionally, the glycine cleavage system catalyzes the degradation of glycine. The H protein shuttles the methylamine group of glycine from the P protein to the T protein. This is Glycine cleavage system H protein from Chromohalobacter salexigens (strain ATCC BAA-138 / DSM 3043 / CIP 106854 / NCIMB 13768 / 1H11).